Reading from the N-terminus, the 243-residue chain is UPF0246 protein M6_Spy1787 (243 aa).

This sequence belongs to the UPF0246 family.

This Streptococcus pyogenes serotype M6 (strain ATCC BAA-946 / MGAS10394) protein is UPF0246 protein M6_Spy1787.